A 32-amino-acid chain; its full sequence is Acyclotide phyb-M (32 aa).

At Gln1 the chain carries Pyrrolidone carboxylic acid. 3 disulfide bridges follow: Cys5–Cys21, Cys9–Cys23, and Cys14–Cys28.

Contains 3 disulfide bonds. In terms of tissue distribution, expressed in midvein, lamina and periphery of leaves (at protein level).

Functionally, probably participates in a plant defense mechanism. This Petunia hybrida (Petunia) protein is Acyclotide phyb-M.